The primary structure comprises 300 residues: Transcription elongation factor A protein 2 (300 aa).

A TFIIS N-terminal domain is found at 6–83; the sequence is EEIARIARRL…KSWKKLLDAS (78 aa). A Glycyl lysine isopeptide (Lys-Gly) (interchain with G-Cter in ubiquitin) cross-link involves residue Lys-58. Ser-60 and Ser-101 each carry phosphoserine. The segment at 84-131 is disordered; the sequence is DAKARERRRGGSLPTSSSKEASEAQDPSRKRPELPRMPSTPRITTFPP. Residues 103–117 show a composition bias toward basic and acidic residues; that stretch reads EASEAQDPSRKRPEL. The 117-residue stretch at 139-255 folds into the TFIIS central domain; it reads VRTKCREMLT…EHQMARTGGT (117 aa). Residues 258–298 form a TFIIS-type zinc finger; that stretch reads DLFTCGKCRKKNCTYTQVQTRSSDEPMTTFVVCNECGNRWK. The Zn(2+) site is built by Cys-262, Cys-265, Cys-290, and Cys-293.

It belongs to the TFS-II family. Interacts with the basal transcription factor GTF2B. Interacts with REXO1.

The protein resides in the nucleus. In terms of biological role, necessary for efficient RNA polymerase II transcription elongation past template-encoded arresting sites. The arresting sites in DNA have the property of trapping a certain fraction of elongating RNA polymerases that pass through, resulting in locked ternary complexes. Cleavage of the nascent transcript by S-II allows the resumption of elongation from the new 3'-terminus. In Bos taurus (Bovine), this protein is Transcription elongation factor A protein 2 (TCEA2).